Reading from the N-terminus, the 593-residue chain is NADH-quinone oxidoreductase subunit C/D (593 aa).

Residues 1-184 (MTADNALYIP…DPYSLTLAKQ (184 aa)) are NADH dehydrogenase I subunit C. The tract at residues 208-593 (DYMFLNLGPN…IDFVMADVDR (386 aa)) is NADH dehydrogenase I subunit D.

In the N-terminal section; belongs to the complex I 30 kDa subunit family. It in the C-terminal section; belongs to the complex I 49 kDa subunit family. NDH-1 is composed of 13 different subunits. Subunits NuoB, CD, E, F, and G constitute the peripheral sector of the complex.

It localises to the cell inner membrane. It carries out the reaction a quinone + NADH + 5 H(+)(in) = a quinol + NAD(+) + 4 H(+)(out). Its function is as follows. NDH-1 shuttles electrons from NADH, via FMN and iron-sulfur (Fe-S) centers, to quinones in the respiratory chain. The immediate electron acceptor for the enzyme in this species is believed to be ubiquinone. Couples the redox reaction to proton translocation (for every two electrons transferred, four hydrogen ions are translocated across the cytoplasmic membrane), and thus conserves the redox energy in a proton gradient. The polypeptide is NADH-quinone oxidoreductase subunit C/D (Pseudomonas syringae pv. tomato (strain ATCC BAA-871 / DC3000)).